Consider the following 1193-residue polypeptide: Chloride channel protein 2 (1193 aa).

Residues 1–168 (MVYFGDRQRD…WIWRHTVARL (168 aa)) are Cytoplasmic-facing. A disordered region spans residues 76 to 97 (SHAFYPCPPPAENARDSDSSDD). 2 helical membrane-spanning segments follow: residues 169–204 (GEDW…IWLY) and 213–236 (VQYI…VHLI). The short motif at 242–246 (GSGIP) is the Selectivity filter part_1 element. Serine 243 serves as a coordination point for chloride. The helical intramembrane region spans 245–252 (IPEMKTIL). Transmembrane regions (helical) follow at residues 261-279 (LTFK…TLGS) and 286-304 (EGPF…SKLV). A Selectivity filter part_2 motif is present at residues 284–288 (GKEGP). 2 intramembrane regions (helical) span residues 320-332 (MLAA…VGAC) and 336-344 (PVGGVLFSI). A run of 5 helical transmembrane segments spans residues 356 to 373 (YWRG…FRLL), 402 to 430 (LFVF…VLFM), 439 to 458 (FLQK…VSSI), 511 to 530 (FGNL…IAST), and 536 to 555 (GMFI…VGEF). The Selectivity filter part_3 signature appears at 536–540 (GMFIP). Phenylalanine 538 lines the chloride pocket. An intramembrane region (helical) is located at residues 576–590 (GGYAVVGAAAFSGSV). Positions 591 to 592 (TH) form an intramembrane region, note=Loop between two helices. Residues 593–604 (TVSVAVIIFEMT) constitute an intramembrane region (helical). Positions 605–609 (GQITH) form an intramembrane region, note=Loop between two helices. A helical membrane pass occupies residues 610–626 (VVPVMIAVLVANAVAAL). The Cytoplasmic segment spans residues 627–1193 (LQPSIYDSII…KSNTENGNHA (567 aa)). Tyrosine 632 serves as a coordination point for chloride. A CBS 1 domain is found at 663 to 723 (MVRDVKYIWH…KMIEKHIGRE (61 aa)). Disordered regions lie at residues 848-884 (TLQD…VSKK), 1103-1122 (NSFV…AVEK), and 1159-1193 (IKHT…GNHA). The CBS 2 domain maps to 1048 to 1105 (IDPSPFQLVERTSILKVHSLFSMVGINHAYVTKIGRLVGVVGLKELRKAIEDINSNSF). Polar residues predominate over residues 1165 to 1193 (GTVSLTMPPQESKQSPSADKSNTENGNHA).

The protein belongs to the chloride channel (TC 2.A.49) family. As to expression, at embryonic stages 13-16, expressed in a subset of the midline cells of the midline primordium and in all of the midline glia. Expressed along the Z-line of the sarcomere in larval longitudinal muscles.

Its subcellular location is the membrane. Voltage-gated chloride channel. Chloride channels have several functions including the regulation of cell volume; membrane potential stabilization, signal transduction and transepithelial transport. This chain is Chloride channel protein 2 (ClC-a), found in Drosophila melanogaster (Fruit fly).